Reading from the N-terminus, the 376-residue chain is Mitogen-activated protein kinase ERK-A (376 aa).

The Protein kinase domain maps to 38–326 (YIKLAYIGEG…VEEALAHPYL (289 aa)). ATP contacts are provided by residues 44 to 52 (IGEGAYGMV) and lysine 67. The Proton acceptor role is filled by aspartate 162. Position 198 is a phosphothreonine (threonine 198). The TXY signature appears at 198 to 200 (TEY). Tyrosine 200 is subject to Phosphotyrosine.

This sequence belongs to the protein kinase superfamily. CMGC Ser/Thr protein kinase family. MAP kinase subfamily. The cofactor is Mg(2+). In terms of processing, dually phosphorylated on Thr-198 and Tyr-200, which activates the enzyme. Phosphorylated on tyrosine residue(s) in response to insulin. As to expression, in third instar larvae, expressed in eye imaginal disks. In adults, expressed in head and body.

The protein localises to the cytoplasm. It is found in the nucleus. The enzyme catalyses L-seryl-[protein] + ATP = O-phospho-L-seryl-[protein] + ADP + H(+). It catalyses the reaction L-threonyl-[protein] + ATP = O-phospho-L-threonyl-[protein] + ADP + H(+). With respect to regulation, activated by tyrosine and threonine phosphorylation. In terms of biological role, serine/threonine kinase which acts as an essential component of the MAP kinase signal transduction pathway to regulate proliferation, differentiation and effect cell fate decisions in various tissues. Required downstream of phl/Raf in the sev/sevenless, tor/torso, and EGF receptor homolog Egfr signal transduction pathways. Required for embryonic epithelial tissue repair. During larval development, mediates Ptth/tor signaling leading to the production of ecdysone, a hormone required for the initiation of metamorphosis. The sequence is that of Mitogen-activated protein kinase ERK-A from Drosophila melanogaster (Fruit fly).